Here is a 576-residue protein sequence, read N- to C-terminus: Sulfite reductase [NADPH] hemoprotein beta-component (576 aa).

Residues Cys-435, Cys-441, Cys-480, and Cys-484 each coordinate [4Fe-4S] cluster. A siroheme-binding site is contributed by Cys-484.

This sequence belongs to the nitrite and sulfite reductase 4Fe-4S domain family. As to quaternary structure, alpha(8)-beta(8). The alpha component is a flavoprotein, the beta component is a hemoprotein. Siroheme serves as cofactor. [4Fe-4S] cluster is required as a cofactor.

The catalysed reaction is hydrogen sulfide + 3 NADP(+) + 3 H2O = sulfite + 3 NADPH + 4 H(+). It functions in the pathway sulfur metabolism; hydrogen sulfide biosynthesis; hydrogen sulfide from sulfite (NADPH route): step 1/1. In terms of biological role, component of the sulfite reductase complex that catalyzes the 6-electron reduction of sulfite to sulfide. This is one of several activities required for the biosynthesis of L-cysteine from sulfate. The chain is Sulfite reductase [NADPH] hemoprotein beta-component from Yersinia pestis bv. Antiqua (strain Antiqua).